A 141-amino-acid polypeptide reads, in one-letter code: MMINAKKLMKLAKKWQQRAALKRKRISFQRSSITTSSQTAVEKGCFVVYTADKIRFSFPLSYLSNTIVQELLKISEEEFGLPTEGPITLPFDSAFLEYLINLIQRRMDEDTEKALLLSISSARSSFQPQQHCSATQQLLVF.

This sequence belongs to the ARG7 family. As to expression, expressed in stamen filaments and petals.

It is found in the cell membrane. Its function is as follows. May promote auxin-stimulated organ elongation, such as hypocotyls, stamen filaments and petals. This chain is Auxin-responsive protein SAUR62, found in Arabidopsis thaliana (Mouse-ear cress).